Consider the following 355-residue polypeptide: Cyanide hydratase (355 aa).

In terms of domain architecture, CN hydrolase spans 6-285 (YKAAAVTSEP…DGLLFVDIDL (280 aa)). Glu46 serves as the catalytic Proton acceptor. Residue Lys128 is part of the active site. Cys163 acts as the Nucleophile in catalysis.

The protein belongs to the carbon-nitrogen hydrolase superfamily. Nitrilase family. As to quaternary structure, oligomer of dimers, forming left-handed helical fibers.

The enzyme catalyses formamide = hydrogen cyanide + H2O. In terms of biological role, catalyzes the hydration of cyanide to formamide. Degradation of cyanide may be important for plant pathogenic fungi in infection of cyanogenic plants. This Gibberella zeae (strain ATCC MYA-4620 / CBS 123657 / FGSC 9075 / NRRL 31084 / PH-1) (Wheat head blight fungus) protein is Cyanide hydratase.